Consider the following 283-residue polypeptide: Pantothenate synthetase (283 aa).

Position 30-37 (30-37) interacts with ATP; that stretch reads MGYFHDGH. Residue H37 is the Proton donor of the active site. Residue Q61 participates in (R)-pantoate binding. A beta-alanine-binding site is contributed by Q61. ATP is bound at residue 147 to 150; that stretch reads GSKD. Residue Q153 participates in (R)-pantoate binding. ATP-binding positions include V176 and 184–187; that span reads MSSR.

The protein belongs to the pantothenate synthetase family. Homodimer.

It is found in the cytoplasm. The catalysed reaction is (R)-pantoate + beta-alanine + ATP = (R)-pantothenate + AMP + diphosphate + H(+). It functions in the pathway cofactor biosynthesis; (R)-pantothenate biosynthesis; (R)-pantothenate from (R)-pantoate and beta-alanine: step 1/1. Functionally, catalyzes the condensation of pantoate with beta-alanine in an ATP-dependent reaction via a pantoyl-adenylate intermediate. This chain is Pantothenate synthetase, found in Desulforapulum autotrophicum (strain ATCC 43914 / DSM 3382 / VKM B-1955 / HRM2) (Desulfobacterium autotrophicum).